The following is a 350-amino-acid chain: Ion-translocating oxidoreductase complex subunit D (350 aa).

4 helical membrane passes run 36–56 (FYFF…IALL), 68–88 (PIIS…IGVS), 89–109 (IPSI…IVIV), and 120–140 (IFNP…VQMT). T185 bears the FMN phosphoryl threonine mark. 5 consecutive transmembrane segments (helical) span residues 212 to 232 (GFGV…LAML), 239 to 259 (WQIS…GYLL), 265 to 285 (IGPL…FIAT), 291 to 311 (ATSV…VYVI), and 315 to 335 (GGYP…APFI).

Belongs to the NqrB/RnfD family. As to quaternary structure, the complex is composed of six subunits: RnfA, RnfB, RnfC, RnfD, RnfE and RnfG. The cofactor is FMN.

It localises to the cell inner membrane. In terms of biological role, part of a membrane-bound complex that couples electron transfer with translocation of ions across the membrane. This chain is Ion-translocating oxidoreductase complex subunit D, found in Shewanella piezotolerans (strain WP3 / JCM 13877).